Here is a 298-residue protein sequence, read N- to C-terminus: N-acetylmuramic acid 6-phosphate etherase (298 aa).

Residues 57 to 220 (IAAAFGKGGR…STGAMIRTGK (164 aa)) enclose the SIS domain. The active-site Proton donor is the glutamate 85. Residue glutamate 116 is part of the active site.

Belongs to the GCKR-like family. MurNAc-6-P etherase subfamily. As to quaternary structure, homodimer.

It carries out the reaction N-acetyl-D-muramate 6-phosphate + H2O = N-acetyl-D-glucosamine 6-phosphate + (R)-lactate. Its pathway is amino-sugar metabolism; 1,6-anhydro-N-acetylmuramate degradation. It functions in the pathway amino-sugar metabolism; N-acetylmuramate degradation. The protein operates within cell wall biogenesis; peptidoglycan recycling. Functionally, specifically catalyzes the cleavage of the D-lactyl ether substituent of MurNAc 6-phosphate, producing GlcNAc 6-phosphate and D-lactate. Together with AnmK, is also required for the utilization of anhydro-N-acetylmuramic acid (anhMurNAc) either imported from the medium or derived from its own cell wall murein, and thus plays a role in cell wall recycling. The protein is N-acetylmuramic acid 6-phosphate etherase of Aeromonas hydrophila subsp. hydrophila (strain ATCC 7966 / DSM 30187 / BCRC 13018 / CCUG 14551 / JCM 1027 / KCTC 2358 / NCIMB 9240 / NCTC 8049).